A 239-amino-acid chain; its full sequence is Ribonuclease HII (239 aa).

The region spanning K18–E231 is the RNase H type-2 domain. 3 residues coordinate a divalent metal cation: D24, E25, and D125.

Belongs to the RNase HII family. Mn(2+) is required as a cofactor. Mg(2+) serves as cofactor.

It localises to the cytoplasm. It carries out the reaction Endonucleolytic cleavage to 5'-phosphomonoester.. Endonuclease that specifically degrades the RNA of RNA-DNA hybrids. In Methanococcus maripaludis (strain C6 / ATCC BAA-1332), this protein is Ribonuclease HII.